Reading from the N-terminus, the 715-residue chain is Lanosterol synthase erg7B (715 aa).

Residues alanine 111–glycine 153 form a PFTB 1 repeat. Catalysis depends on aspartate 445, which acts as the Proton donor. PFTB repeat units lie at residues isoleucine 550 to glycine 590 and valine 599 to threonine 640.

The protein belongs to the terpene cyclase/mutase family.

The protein localises to the lipid droplet. It localises to the endoplasmic reticulum membrane. The catalysed reaction is (S)-2,3-epoxysqualene = lanosterol. It participates in steroid metabolism; ergosterol biosynthesis. Functionally, lanosterol synthase; part of the third module of ergosterol biosynthesis pathway that includes the late steps of the pathway. ERG7A and ERG7B catalyze the cyclization of (S)-2,3 oxidosqualene to lanosterol, a reaction that forms the sterol core. The third module or late pathway involves the ergosterol synthesis itself through consecutive reactions that mainly occur in the endoplasmic reticulum (ER) membrane. Firstly, the squalene synthase erg9 catalyzes the condensation of 2 farnesyl pyrophosphate moieties to form squalene, which is the precursor of all steroids. Squalene synthase is crucial for balancing the incorporation of farnesyl diphosphate (FPP) into sterol and nonsterol isoprene synthesis. Secondly, squalene is converted into lanosterol by the consecutive action of the squalene epoxidase erg1 and the lanosterol synthase erg7. Then, the delta(24)-sterol C-methyltransferase erg6 methylates lanosterol at C-24 to produce eburicol. Eburicol is the substrate of the sterol 14-alpha demethylase encoded by cyp51A and cyp51B, to yield 4,4,24-trimethyl ergosta-8,14,24(28)-trienol. The C-14 reductase erg24 then reduces the C14=C15 double bond which leads to 4,4-dimethylfecosterol. A sequence of further demethylations at C-4, involving the C-4 demethylation complex containing the C-4 methylsterol oxidases erg25A or erg25B, the sterol-4-alpha-carboxylate 3-dehydrogenase erg26 and the 3-keto-steroid reductase erg27, leads to the production of fecosterol via 4-methylfecosterol. The C-8 sterol isomerase erg2 then catalyzes the reaction which results in unsaturation at C-7 in the B ring of sterols and thus converts fecosterol to episterol. The sterol-C5-desaturase erg3B then catalyzes the introduction of a C-5 double bond in the B ring to produce 5-dehydroepisterol. The 2 other sterol-C5-desaturases, erg3A and erg3C, seem to be less important in ergosterol biosynthesis. The C-22 sterol desaturase erg5 further converts 5-dehydroepisterol into ergosta-5,7,22,24(28)-tetraen-3beta-ol by forming the C-22(23) double bond in the sterol side chain. Finally, ergosta-5,7,22,24(28)-tetraen-3beta-ol is substrate of the C-24(28) sterol reductases erg4A and erg4B to produce ergosterol. Possible alternative sterol biosynthetic pathways might exist from fecosterol to ergosterol, depending on the activities of the erg3 isoforms. The protein is Lanosterol synthase erg7B of Aspergillus fumigatus (strain ATCC MYA-4609 / CBS 101355 / FGSC A1100 / Af293) (Neosartorya fumigata).